Here is a 119-residue protein sequence, read N- to C-terminus: Large ribosomal subunit protein bL20 (119 aa).

The protein belongs to the bacterial ribosomal protein bL20 family.

Functionally, binds directly to 23S ribosomal RNA and is necessary for the in vitro assembly process of the 50S ribosomal subunit. It is not involved in the protein synthesizing functions of that subunit. The sequence is that of Large ribosomal subunit protein bL20 from Dichelobacter nodosus (strain VCS1703A).